Reading from the N-terminus, the 850-residue chain is Penicillin-binding protein 1A (850 aa).

Over methionine 1–lysine 5 the chain is Cytoplasmic. Residues tyrosine 6–tyrosine 26 traverse the membrane as a helical; Signal-anchor for type II membrane protein segment. The Periplasmic segment spans residues arginine 27–phenylalanine 850. Positions methionine 48 to aspartate 216 are transglycosylase. Glutamate 86 (proton donor; for transglycosylase activity) is an active-site residue. Residues aspartate 400 to arginine 710 form a transpeptidase region. Serine 465 (acyl-ester intermediate; for transpeptidase activity) is an active-site residue.

It in the N-terminal section; belongs to the glycosyltransferase 51 family. This sequence in the C-terminal section; belongs to the transpeptidase family.

Its subcellular location is the cell inner membrane. The enzyme catalyses [GlcNAc-(1-&gt;4)-Mur2Ac(oyl-L-Ala-gamma-D-Glu-L-Lys-D-Ala-D-Ala)](n)-di-trans,octa-cis-undecaprenyl diphosphate + beta-D-GlcNAc-(1-&gt;4)-Mur2Ac(oyl-L-Ala-gamma-D-Glu-L-Lys-D-Ala-D-Ala)-di-trans,octa-cis-undecaprenyl diphosphate = [GlcNAc-(1-&gt;4)-Mur2Ac(oyl-L-Ala-gamma-D-Glu-L-Lys-D-Ala-D-Ala)](n+1)-di-trans,octa-cis-undecaprenyl diphosphate + di-trans,octa-cis-undecaprenyl diphosphate + H(+). It catalyses the reaction Preferential cleavage: (Ac)2-L-Lys-D-Ala-|-D-Ala. Also transpeptidation of peptidyl-alanyl moieties that are N-acyl substituents of D-alanine.. Its pathway is cell wall biogenesis; peptidoglycan biosynthesis. In terms of biological role, cell wall formation. Synthesis of cross-linked peptidoglycan from the lipid intermediates. The enzyme has a penicillin-insensitive transglycosylase N-terminal domain (formation of linear glycan strands) and a penicillin-sensitive transpeptidase C-terminal domain (cross-linking of the peptide subunits). The chain is Penicillin-binding protein 1A (mrcA) from Escherichia coli (strain K12).